The primary structure comprises 208 residues: Large ribosomal subunit protein uL4 (208 aa).

The disordered stretch occupies residues 49–78; that stretch reads KAKGISDISGTTAKPYRQKHTGRARQGSLR.

It belongs to the universal ribosomal protein uL4 family. As to quaternary structure, part of the 50S ribosomal subunit.

In terms of biological role, one of the primary rRNA binding proteins, this protein initially binds near the 5'-end of the 23S rRNA. It is important during the early stages of 50S assembly. It makes multiple contacts with different domains of the 23S rRNA in the assembled 50S subunit and ribosome. Functionally, forms part of the polypeptide exit tunnel. The chain is Large ribosomal subunit protein uL4 from Anaplasma phagocytophilum (strain HZ).